A 156-amino-acid chain; its full sequence is ATP synthase subunit b (156 aa).

Residues 11-31 traverse the membrane as a helical segment; the sequence is LIAFALFVWFCMKFVWPPIIN.

Belongs to the ATPase B chain family. F-type ATPases have 2 components, F(1) - the catalytic core - and F(0) - the membrane proton channel. F(1) has five subunits: alpha(3), beta(3), gamma(1), delta(1), epsilon(1). F(0) has three main subunits: a(1), b(2) and c(10-14). The alpha and beta chains form an alternating ring which encloses part of the gamma chain. F(1) is attached to F(0) by a central stalk formed by the gamma and epsilon chains, while a peripheral stalk is formed by the delta and b chains.

Its subcellular location is the cell inner membrane. Its function is as follows. F(1)F(0) ATP synthase produces ATP from ADP in the presence of a proton or sodium gradient. F-type ATPases consist of two structural domains, F(1) containing the extramembraneous catalytic core and F(0) containing the membrane proton channel, linked together by a central stalk and a peripheral stalk. During catalysis, ATP synthesis in the catalytic domain of F(1) is coupled via a rotary mechanism of the central stalk subunits to proton translocation. Functionally, component of the F(0) channel, it forms part of the peripheral stalk, linking F(1) to F(0). This is ATP synthase subunit b from Haemophilus influenzae (strain 86-028NP).